Reading from the N-terminus, the 163-residue chain is Nucleotide-binding protein Dde_2479 (163 aa).

The protein belongs to the YajQ family.

Its function is as follows. Nucleotide-binding protein. In Oleidesulfovibrio alaskensis (strain ATCC BAA-1058 / DSM 17464 / G20) (Desulfovibrio alaskensis), this protein is Nucleotide-binding protein Dde_2479.